Here is a 386-residue protein sequence, read N- to C-terminus: Chaperone protein DnaJ (386 aa).

Positions 5-69 (DLYDVLGVKK…QKRAQYDQFG (65 aa)) constitute a J domain. The segment at 140–224 (GKETSIKYNR…CHGAGVTEER (85 aa)) adopts a CR-type zinc-finger fold. C153, C156, C170, C173, C196, C199, C212, and C215 together coordinate Zn(2+). CXXCXGXG motif repeat units follow at residues 153 to 160 (CHTCHGSG), 170 to 177 (CSTCHGQG), 196 to 203 (CPTCGGKG), and 212 to 219 (CDTCHGAG).

This sequence belongs to the DnaJ family. Homodimer. The cofactor is Zn(2+).

The protein localises to the cytoplasm. Functionally, participates actively in the response to hyperosmotic and heat shock by preventing the aggregation of stress-denatured proteins and by disaggregating proteins, also in an autonomous, DnaK-independent fashion. Unfolded proteins bind initially to DnaJ; upon interaction with the DnaJ-bound protein, DnaK hydrolyzes its bound ATP, resulting in the formation of a stable complex. GrpE releases ADP from DnaK; ATP binding to DnaK triggers the release of the substrate protein, thus completing the reaction cycle. Several rounds of ATP-dependent interactions between DnaJ, DnaK and GrpE are required for fully efficient folding. Also involved, together with DnaK and GrpE, in the DNA replication of plasmids through activation of initiation proteins. In Limosilactobacillus fermentum (strain NBRC 3956 / LMG 18251) (Lactobacillus fermentum), this protein is Chaperone protein DnaJ.